The following is a 207-amino-acid chain: Large ribosomal subunit protein uL4 (207 aa).

A disordered region spans residues 53 to 76 (NRSAVRGGGRKPWRQKGTGRARQG). Positions 60–71 (GGRKPWRQKGTG) are enriched in basic residues.

It belongs to the universal ribosomal protein uL4 family. Part of the 50S ribosomal subunit.

Functionally, one of the primary rRNA binding proteins, this protein initially binds near the 5'-end of the 23S rRNA. It is important during the early stages of 50S assembly. It makes multiple contacts with different domains of the 23S rRNA in the assembled 50S subunit and ribosome. In terms of biological role, forms part of the polypeptide exit tunnel. This chain is Large ribosomal subunit protein uL4, found in Staphylococcus saprophyticus subsp. saprophyticus (strain ATCC 15305 / DSM 20229 / NCIMB 8711 / NCTC 7292 / S-41).